We begin with the raw amino-acid sequence, 94 residues long: Sec-independent protein translocase protein TatA (94 aa).

A helical transmembrane segment spans residues 1 to 21; the sequence is MFGRLGAPEIILILVVIILLF. The segment at 44 to 94 is disordered; that stretch reads AKAMKSEGQESTPAGPPNTDEQPPAQRTIQAAPGDVTSSRPVSEPTDTTKR. A compositionally biased stretch (polar residues) spans 62–72; it reads TDEQPPAQRTI.

Belongs to the TatA/E family. In terms of assembly, the Tat system comprises two distinct complexes: a TatABC complex, containing multiple copies of TatA, TatB and TatC subunits, and a separate TatA complex, containing only TatA subunits. Substrates initially bind to the TatABC complex, which probably triggers association of the separate TatA complex to form the active translocon.

It is found in the cell membrane. Part of the twin-arginine translocation (Tat) system that transports large folded proteins containing a characteristic twin-arginine motif in their signal peptide across membranes. TatA could form the protein-conducting channel of the Tat system. The polypeptide is Sec-independent protein translocase protein TatA (Streptomyces avermitilis (strain ATCC 31267 / DSM 46492 / JCM 5070 / NBRC 14893 / NCIMB 12804 / NRRL 8165 / MA-4680)).